The primary structure comprises 128 residues: uncharacterized protein (128 aa).

Residues C18 to D116 form the HTH hxlR-type domain.

This is an uncharacterized protein from Bacillus subtilis (strain 168).